We begin with the raw amino-acid sequence, 80 residues long: RNA-binding protein Hfq (80 aa).

Residues 10-69 form the Sm domain; that stretch reads DPFLNLLRKEHVPVSIYLVNGIKLQGHIESFDQYVVLLRNTVTQMVYKHAISTVVPGRPV.

Belongs to the Hfq family. Homohexamer.

In terms of biological role, RNA chaperone that binds small regulatory RNA (sRNAs) and mRNAs to facilitate mRNA translational regulation in response to envelope stress, environmental stress and changes in metabolite concentrations. Also binds with high specificity to tRNAs. This Leptothrix cholodnii (strain ATCC 51168 / LMG 8142 / SP-6) (Leptothrix discophora (strain SP-6)) protein is RNA-binding protein Hfq.